We begin with the raw amino-acid sequence, 702 residues long: Putative methyltransferase NSUN7 (702 aa).

C424 serves as the catalytic Nucleophile. Disordered stretches follow at residues K522 to A541, E567 to L593, and P675 to L702. The span at S523–K534 shows a compositional bias: basic residues. Residues E567–Q587 are compositionally biased toward polar residues. Residues R681–R691 show a composition bias toward basic and acidic residues.

Belongs to the class I-like SAM-binding methyltransferase superfamily. RsmB/NOP family.

Functionally, may have S-adenosyl-L-methionine-dependent methyl-transferase activity. This Macaca fascicularis (Crab-eating macaque) protein is Putative methyltransferase NSUN7 (NSUN7).